The sequence spans 192 residues: Bifunctional protein PyrR (192 aa).

The short motif at valine 107 to threonine 119 is the PRPP-binding element.

It belongs to the purine/pyrimidine phosphoribosyltransferase family. PyrR subfamily.

It carries out the reaction UMP + diphosphate = 5-phospho-alpha-D-ribose 1-diphosphate + uracil. In terms of biological role, regulates the transcription of the pyrimidine nucleotide (pyr) operon in response to exogenous pyrimidines. Its function is as follows. Also displays a weak uracil phosphoribosyltransferase activity which is not physiologically significant. The protein is Bifunctional protein PyrR of Corynebacterium efficiens (strain DSM 44549 / YS-314 / AJ 12310 / JCM 11189 / NBRC 100395).